Here is a 362-residue protein sequence, read N- to C-terminus: Aminomethyltransferase (362 aa).

It belongs to the GcvT family. In terms of assembly, the glycine cleavage system is composed of four proteins: P, T, L and H.

It carries out the reaction N(6)-[(R)-S(8)-aminomethyldihydrolipoyl]-L-lysyl-[protein] + (6S)-5,6,7,8-tetrahydrofolate = N(6)-[(R)-dihydrolipoyl]-L-lysyl-[protein] + (6R)-5,10-methylene-5,6,7,8-tetrahydrofolate + NH4(+). The glycine cleavage system catalyzes the degradation of glycine. The polypeptide is Aminomethyltransferase (Pseudothermotoga lettingae (strain ATCC BAA-301 / DSM 14385 / NBRC 107922 / TMO) (Thermotoga lettingae)).